The primary structure comprises 138 residues: Putative protein encoded by LINC02912 (138 aa).

The next 2 helical transmembrane spans lie at 32–52 (FALS…CLIC) and 65–85 (CLIN…TISQ). The interval 109–138 (SGGQSQHSWPCPERSKNLPQVSKQLRNRAG) is disordered.

The protein localises to the membrane. The sequence is that of Putative protein encoded by LINC02912 from Homo sapiens (Human).